Reading from the N-terminus, the 381-residue chain is MIISEMQRKLATWAATDPSLRIQRLLRLITQPEWLAEAARITLSSKGAHTPGVDGVNKTMLQARLAVELQILRDELLSGHYQPLPARRVYIPKSNGKLRPLGIPALRDRIVQRAMLMAMEPIWESDFHTLSYGFRPERSVHHAIRTVKLQLTDCGETRGRWVIEGDLSSYFDTVHHRLLMKAVRRRISDARFMTLLWKTIKAGHIDVGLFRAASEGVPQGGVISPLLSNIMLNEFDQYLHERYLSGKARKDRWYWNNSIQRGRSTAVRENWQWKPAVAYCRYADDFVLIVKGTKAQVEAIREECRGVLEGSLKLRLNMDKTKIPHVNDGFIFLGHRLIRKRSRYGEMRVVSTIPQEKARNFAASLTALLWKVRISGEILLG.

The Reverse transcriptase domain maps to 72–337; that stretch reads LRDELLSGHY…DGFIFLGHRL (266 aa). Asp166, Asp284, and Asp285 together coordinate Mg(2+).

Belongs to the bacterial reverse transcriptase family.

This Escherichia coli (strain K12) protein is Protein YkfC (ykfC).